Consider the following 162-residue polypeptide: MSALEDVRTVALPRDCVSTVQAHLRSVGQQGHEGMALWVGVQQDQHFVIAETVIPAQRHIRTSDGVCVMVPAEELHRLNVWLYKRGLTLLAQIHSHPGRAYHSTTDDAYAVATTIGCLSLVVPNFAREPFDFAHVAAYRLDAKANWNEVPSAVLTRMITITS.

In terms of domain architecture, MPN spans 9–147 (TVALPRDCVS…YRLDAKANWN (139 aa)). Zn(2+) contacts are provided by His94, His96, and Asp107.

It belongs to the peptidase M67B family.

This is Probable metalloprotease y4jG from Sinorhizobium fredii (strain NBRC 101917 / NGR234).